Consider the following 2281-residue polypeptide: Protein Ycf2 (2281 aa).

1634-1641 (GSIGTGRS) is a binding site for ATP.

It belongs to the Ycf2 family.

It localises to the plastid. The protein localises to the chloroplast stroma. Functionally, probable ATPase of unknown function. Its presence in a non-photosynthetic plant (Epifagus virginiana) and experiments in tobacco indicate that it has an essential function which is probably not related to photosynthesis. The polypeptide is Protein Ycf2 (Buxus microphylla (Littleleaf boxwood)).